A 454-amino-acid chain; its full sequence is Putative tyrosine kinase 36 (454 aa).

ATP-binding positions include 80 to 88 (LGSGSFGKV) and K98. The active-site Proton acceptor is D192.

The protein belongs to the protein kinase superfamily. Tyr protein kinase family.

It catalyses the reaction L-tyrosyl-[protein] + ATP = O-phospho-L-tyrosyl-[protein] + ADP + H(+). The protein is Putative tyrosine kinase 36 (36) of Alcelaphine herpesvirus 1 (strain C500) (AlHV-1).